Reading from the N-terminus, the 212-residue chain is ATP phosphoribosyltransferase (212 aa).

The protein belongs to the ATP phosphoribosyltransferase family. Short subfamily. As to quaternary structure, heteromultimer composed of HisG and HisZ subunits.

It is found in the cytoplasm. The catalysed reaction is 1-(5-phospho-beta-D-ribosyl)-ATP + diphosphate = 5-phospho-alpha-D-ribose 1-diphosphate + ATP. The protein operates within amino-acid biosynthesis; L-histidine biosynthesis; L-histidine from 5-phospho-alpha-D-ribose 1-diphosphate: step 1/9. Functionally, catalyzes the condensation of ATP and 5-phosphoribose 1-diphosphate to form N'-(5'-phosphoribosyl)-ATP (PR-ATP). Has a crucial role in the pathway because the rate of histidine biosynthesis seems to be controlled primarily by regulation of HisG enzymatic activity. This chain is ATP phosphoribosyltransferase, found in Prochlorococcus marinus (strain MIT 9515).